The following is a 390-amino-acid chain: Uroporphyrinogen decarboxylase 2, chloroplastic (390 aa).

Residues methionine 1–arginine 30 constitute a chloroplast transit peptide. Substrate-binding positions include arginine 70–arginine 74, phenylalanine 89, serine 119, aspartate 120, tyrosine 197, serine 252, and histidine 367.

This sequence belongs to the uroporphyrinogen decarboxylase family. In terms of assembly, homodimer.

It localises to the plastid. It is found in the chloroplast. The enzyme catalyses uroporphyrinogen III + 4 H(+) = coproporphyrinogen III + 4 CO2. It participates in porphyrin-containing compound metabolism; protoporphyrin-IX biosynthesis; coproporphyrinogen-III from 5-aminolevulinate: step 4/4. Catalyzes the decarboxylation of four acetate groups of uroporphyrinogen-III to yield coproporphyrinogen-III. This chain is Uroporphyrinogen decarboxylase 2, chloroplastic, found in Oryza sativa subsp. japonica (Rice).